The sequence spans 245 residues: Extracellular protein ARB_04177 (245 aa).

The protein resides in the secreted. This Arthroderma benhamiae (strain ATCC MYA-4681 / CBS 112371) (Trichophyton mentagrophytes) protein is Extracellular protein ARB_04177.